We begin with the raw amino-acid sequence, 154 residues long: MNNDNTKVYVRVAGKRPENFVETKPFIWDSRRDKILWTKISKIDSLEDMDWQELGADLGAPEPFLKKRSYTLFQNQLKVLSNQIDVTSNTRSSSESRNSVDNNILQNLQASRIMNHKLDKTDNLANNQESSSELSNLSVSKSALEDALMDCLQL.

It belongs to the ATG29 family.

The protein resides in the preautophagosomal structure. Plays a role in autophagy. Functions at the preautophagosomal structure (PAS) in order to form normal autophagosomes under starvation conditions. Also plays a role in mitophagy and regulation of filamentous growth. This Kluyveromyces lactis (strain ATCC 8585 / CBS 2359 / DSM 70799 / NBRC 1267 / NRRL Y-1140 / WM37) (Yeast) protein is Autophagy-related protein 29 (ATG29).